The primary structure comprises 106 residues: Small ribosomal subunit protein uS17 (106 aa).

The protein belongs to the universal ribosomal protein uS17 family. As to quaternary structure, part of the 30S ribosomal subunit.

One of the primary rRNA binding proteins, it binds specifically to the 5'-end of 16S ribosomal RNA. The chain is Small ribosomal subunit protein uS17 from Methanosphaera stadtmanae (strain ATCC 43021 / DSM 3091 / JCM 11832 / MCB-3).